Reading from the N-terminus, the 79-residue chain is Cell division protein ZapB (79 aa).

Residues 4–78 (EVFEKLEAKV…LRALLGKMEE (75 aa)) adopt a coiled-coil conformation.

This sequence belongs to the ZapB family. As to quaternary structure, homodimer. The ends of the coiled-coil dimer bind to each other, forming polymers. Interacts with FtsZ.

The protein localises to the cytoplasm. Its function is as follows. Non-essential, abundant cell division factor that is required for proper Z-ring formation. It is recruited early to the divisome by direct interaction with FtsZ, stimulating Z-ring assembly and thereby promoting cell division earlier in the cell cycle. Its recruitment to the Z-ring requires functional FtsA or ZipA. In Erwinia tasmaniensis (strain DSM 17950 / CFBP 7177 / CIP 109463 / NCPPB 4357 / Et1/99), this protein is Cell division protein ZapB.